The chain runs to 159 residues: Large ribosomal subunit protein bL17 (159 aa).

Residues 119 to 138 show a composition bias toward low complexity; it reads PVTPKAKPAKSTAKAAPKSK. The disordered stretch occupies residues 119-159; that stretch reads PVTPKAKPAKSTAKAAPKSKAPVEETPDEPASEETAEAEAD. Over residues 143–159 the composition is skewed to acidic residues; it reads ETPDEPASEETAEAEAD.

This sequence belongs to the bacterial ribosomal protein bL17 family. In terms of assembly, part of the 50S ribosomal subunit. Contacts protein L32.

This Leifsonia xyli subsp. xyli (strain CTCB07) protein is Large ribosomal subunit protein bL17.